The following is a 466-amino-acid chain: Pyruvate kinase (466 aa).

Arg32 contributes to the substrate binding site. Asn34, Ser36, and Asp66 together coordinate K(+). 34-37 (NTSH) provides a ligand contact to ATP. Position 73 (Arg73) interacts with ATP. Glu219 lines the Mg(2+) pocket. Substrate is bound by residues Gly242, Asp243, and Thr275. Asp243 contacts Mg(2+).

The protein belongs to the pyruvate kinase family. Homotetramer. It depends on a divalent metal cation as a cofactor.

It carries out the reaction pyruvate + ATP = phosphoenolpyruvate + ADP + H(+). It participates in carbohydrate degradation; glycolysis; pyruvate from D-glyceraldehyde 3-phosphate: step 5/5. Allosterically activated by AMP and inhibited by ATP. This Thermotoga maritima (strain ATCC 43589 / DSM 3109 / JCM 10099 / NBRC 100826 / MSB8) protein is Pyruvate kinase (pyk).